The following is a 155-amino-acid chain: Small ribosomal subunit protein uS7cz/uS7cy (155 aa).

It belongs to the universal ribosomal protein uS7 family. As to quaternary structure, part of the 30S ribosomal subunit.

The protein resides in the plastid. It localises to the chloroplast. Its function is as follows. One of the primary rRNA binding proteins, it binds directly to 16S rRNA where it nucleates assembly of the head domain of the 30S subunit. The chain is Small ribosomal subunit protein uS7cz/uS7cy (rps7-A) from Piper cenocladum (Ant piper).